A 264-amino-acid polypeptide reads, in one-letter code: MKAYLDLMRHVLDNGTDKSDRTGTGTRSVFGYQMRFDLGKGFPLLTTKKLHLRSIIHELLWFLKGDTNIKYLKDNNVSIWDEWADENGDLGPVYGYQWRNWPAPDGRHIDQIANVLEQIKKNPDSRRLIVSAWNPALVDEMALPPCHALFQFYVADGKLSCQLYQRSADIFLGVPFNIASYALLTMMMAQVCGLEAGEFVHTFGDAHLYRNHFEQAALQLEREPRALPVMKINPEVKDLFAFKFEDFELEGYDPHPHIKAAVSV.

R21 lines the dUMP pocket. H51 is a binding site for (6R)-5,10-methylene-5,6,7,8-tetrahydrofolate. 126–127 (RR) serves as a coordination point for dUMP. C146 acts as the Nucleophile in catalysis. Residues 166 to 169 (RSAD), N177, and 207 to 209 (HLY) each bind dUMP. Residue D169 coordinates (6R)-5,10-methylene-5,6,7,8-tetrahydrofolate. S263 is a binding site for (6R)-5,10-methylene-5,6,7,8-tetrahydrofolate.

This sequence belongs to the thymidylate synthase family. Bacterial-type ThyA subfamily. In terms of assembly, homodimer.

The protein resides in the cytoplasm. It catalyses the reaction dUMP + (6R)-5,10-methylene-5,6,7,8-tetrahydrofolate = 7,8-dihydrofolate + dTMP. Its pathway is pyrimidine metabolism; dTTP biosynthesis. Catalyzes the reductive methylation of 2'-deoxyuridine-5'-monophosphate (dUMP) to 2'-deoxythymidine-5'-monophosphate (dTMP) while utilizing 5,10-methylenetetrahydrofolate (mTHF) as the methyl donor and reductant in the reaction, yielding dihydrofolate (DHF) as a by-product. This enzymatic reaction provides an intracellular de novo source of dTMP, an essential precursor for DNA biosynthesis. This chain is Thymidylate synthase, found in Neisseria meningitidis serogroup A / serotype 4A (strain DSM 15465 / Z2491).